The primary structure comprises 548 residues: Internalin H (548 aa).

The signal sequence occupies residues 1–30; the sequence is MKKRWNSVFKLVLMVTAILGLSLYVTTSQG. LRR repeat units follow at residues 93 to 105, 113 to 127, 135 to 149, 157 to 171, 179 to 193, 201 to 215, and 223 to 236; these read GVQY…GLEL, LTPL…ELEL, VSAI…TLDL, VTPL…VLYL, ISPL…YLSI, LTPL…TLKA, and ISPL…IEVH. The segment at 480-518 is disordered; that stretch reads FTKNDNPNPDDPTTNTPTGNGDGTSNPSNSGGNTTLPTA. The span at 483-498 shows a compositional bias: low complexity; that stretch reads NDNPNPDDPTTNTPTG. Over residues 504-516 the composition is skewed to polar residues; it reads SNPSNSGGNTTLP. The short motif at 515 to 519 is the LPXTG sorting signal element; sequence LPTAG. A Pentaglycyl murein peptidoglycan amidated alanine modification is found at Ala518. The propeptide at 519–548 is removed by sortase A; it reads GDENTMLPIFIGVFLLGTATLILRKTIKVK.

The protein belongs to the internalin family.

It is found in the secreted. It localises to the cell wall. Functionally, contributes to systemic listeriosis in mice by decreasing host IL-6 cytokine production and thus evasion of the host immune response. Does not contribute to invasion of the host intestinal tissue. This Listeria monocytogenes serovar 1/2a (strain ATCC BAA-679 / EGD-e) protein is Internalin H (inlH).